We begin with the raw amino-acid sequence, 209 residues long: V-type ATP synthase subunit D (209 aa).

This sequence belongs to the V-ATPase D subunit family.

Produces ATP from ADP in the presence of a proton gradient across the membrane. This Anaeromyxobacter dehalogenans (strain 2CP-C) protein is V-type ATP synthase subunit D.